Consider the following 388-residue polypeptide: Chalcone synthase (388 aa).

Cys-164 is a catalytic residue.

The protein belongs to the thiolase-like superfamily. Chalcone/stilbene synthases family.

The catalysed reaction is (E)-4-coumaroyl-CoA + 3 malonyl-CoA + 3 H(+) = 2',4,4',6'-tetrahydroxychalcone + 3 CO2 + 4 CoA. It participates in secondary metabolite biosynthesis; flavonoid biosynthesis. Its function is as follows. The primary product of this enzyme is 4,2',4',6'-tetrahydroxychalcone (also termed naringenin-chalcone or chalcone) which can under specific conditions spontaneously isomerize into naringenin. This Vigna unguiculata (Cowpea) protein is Chalcone synthase (CHS).